Consider the following 355-residue polypeptide: Heat-inducible transcription repressor HrcA (355 aa).

It belongs to the HrcA family.

In terms of biological role, negative regulator of class I heat shock genes (grpE-dnaK-dnaJ and groELS operons). Prevents heat-shock induction of these operons. The chain is Heat-inducible transcription repressor HrcA from Nitratidesulfovibrio vulgaris (strain DP4) (Desulfovibrio vulgaris).